The following is a 360-amino-acid chain: Histidinol-phosphate aminotransferase (360 aa).

Lysine 208 carries the post-translational modification N6-(pyridoxal phosphate)lysine.

It belongs to the class-II pyridoxal-phosphate-dependent aminotransferase family. Histidinol-phosphate aminotransferase subfamily. Homodimer. It depends on pyridoxal 5'-phosphate as a cofactor.

The enzyme catalyses L-histidinol phosphate + 2-oxoglutarate = 3-(imidazol-4-yl)-2-oxopropyl phosphate + L-glutamate. The protein operates within amino-acid biosynthesis; L-histidine biosynthesis; L-histidine from 5-phospho-alpha-D-ribose 1-diphosphate: step 7/9. This is Histidinol-phosphate aminotransferase (hisC) from Lactococcus lactis subsp. lactis (strain IL1403) (Streptococcus lactis).